The primary structure comprises 369 residues: Flagellar P-ring protein 2 (369 aa).

The first 24 residues, 1-24 (MCAFAAILSLLSVLLMATSRSSDA), serve as a signal peptide directing secretion.

The protein belongs to the FlgI family. The basal body constitutes a major portion of the flagellar organelle and consists of four rings (L,P,S, and M) mounted on a central rod.

It localises to the periplasm. Its subcellular location is the bacterial flagellum basal body. In terms of biological role, assembles around the rod to form the L-ring and probably protects the motor/basal body from shearing forces during rotation. This is Flagellar P-ring protein 2 from Burkholderia thailandensis (strain ATCC 700388 / DSM 13276 / CCUG 48851 / CIP 106301 / E264).